A 132-amino-acid chain; its full sequence is Protein MrkF (132 aa).

The protein localises to the fimbrium. Functionally, appears to affect the stability of the intact fimbriae on the cell surface. This Klebsiella pneumoniae protein is Protein MrkF (mrkF).